The sequence spans 38 residues: MKVRTSVKKLCRNCKIVRRYNVVRVICKSEPKHKQRQG.

Belongs to the bacterial ribosomal protein bL36 family.

The sequence is that of Large ribosomal subunit protein bL36 from Buchnera aphidicola subsp. Baizongia pistaciae (strain Bp).